Reading from the N-terminus, the 136-residue chain is uncharacterized protein (136 aa).

The protein to E.coli YcgX and YdfO.

This is an uncharacterized protein from Escherichia coli (strain K12).